The sequence spans 41 residues: Large ribosomal subunit protein bL36 (41 aa).

It belongs to the bacterial ribosomal protein bL36 family.

This Brucella abortus (strain S19) protein is Large ribosomal subunit protein bL36.